A 277-amino-acid polypeptide reads, in one-letter code: Cis-3,4-dihydrophenanthrene-3,4-diol dehydrogenase (277 aa).

NAD(+)-binding positions include 10-37 (FLTG…TVLD) and Asp60. Ser143 contacts substrate. Residue Tyr156 is the Proton acceptor of the active site. An NAD(+)-binding site is contributed by Lys160.

Belongs to the short-chain dehydrogenases/reductases (SDR) family. In terms of assembly, homotetramer.

It carries out the reaction (3S,4R)-3,4-dihydrophenanthrene-3,4-diol + NAD(+) = phenanthrene-3,4-diol + NADH + H(+). Inhibited by heavy metal such as Hg(2+) and by p-chloromercuribenzoate. Involved in the degradation of phenanthrene. Catalyzes the oxidation of cis-phenanthrene dihydrodiol (PDD) to yield phenanthrenediol. It can use either NAD or NADP as electron acceptor, however NAD is preferred to NADP. In Alcaligenes faecalis, this protein is Cis-3,4-dihydrophenanthrene-3,4-diol dehydrogenase (phnB).